The sequence spans 761 residues: Cyclin-D-binding Myb-like transcription factor 1 (761 aa).

The interaction with CCND2 stretch occupies residues 1 to 237 (MSTVEEDSDT…TPEEIEKLKE (237 aa)). The disordered stretch occupies residues 24 to 51 (DTDGNLILHCPQNDPDEVDSEDSTEPPH). The span at 37–47 (DPDEVDSEDST) shows a compositional bias: acidic residues. Residues 87–170 (VTMTATTEVA…IDILMNNIER (84 aa)) form a required for transcriptional activation region. The segment at 87–458 (VTMTATTEVA…DNTAISPSPM (372 aa)) is required for DNA-binding. The segment at 176 to 761 (GIKDATEIIF…KDVEDLVNCH (586 aa)) is interaction with CCND1, CCND2 and CCND3. One can recognise a Myb-like 1 domain in the interval 225-263 (GKYTPEEIEKLKELRIKHGNDWATIGAALGRSASSVKDR). Positions 268 to 333 (KDTCNTGKWT…KWLNYLNWKQ (66 aa)) constitute an HTH myb-type domain. Positions 306-329 (WAAVAERVGTRSEKQCRSKWLNYL) form a DNA-binding region, H-T-H motif. The Myb-like 2 domain occupies 339–388 (WTKEDEINLILRIAELDVADENDINWDLLAEGWSSVRSPQWLRSKWWTIK). Residues 459 to 761 (AALQIPVQIT…KDVEDLVNCH (303 aa)) form a required for transcriptional activation region. Disordered stretches follow at residues 584–625 (SLSQ…MTIQ) and 740–761 (GSSLGSPVSEDSKDVEDLVNCH).

Belongs to the DMTF1 family. Interacts with the D-type cyclins CCND1, CCND2 and CCND3. Interaction with D-type cyclins may modulate transcriptional activation by this protein. In terms of processing, phosphorylated by the cyclin-D2/CDK4, cyclin-D3/CDK4 and cyclin-D2/CDK6 complexes and to a lesser extent by the cyclin-D1/CDK4 complex. Ubiquitously expressed (at mRNA level). Expressed in brain, intestine, kidney, lung, pancreas, skin, spleen and tongue (at protein level). Expressed at high levels in testis and thymus (at protein level). In all tissues examined, expression is predominant in non-proliferating and differentiated cell types. These include epithelial, interstitial and smooth muscle cells of the intestine, differentiated spermatids, sperm and interstitial cells of the testis, and lymphoid cells of the medullary compartment of the thymus.

Its subcellular location is the nucleus. Functionally, transcriptional activator which activates the CDKN2A/ARF locus in response to Ras-Raf signaling, thereby promoting p53/TP53-dependent growth arrest. May also cooperate with MYB to activate transcription of the ANPEP gene. Binds to the consensus sequence 5'-CCCG[GT]ATGT-3'. This Mus musculus (Mouse) protein is Cyclin-D-binding Myb-like transcription factor 1 (Dmtf1).